The following is a 147-amino-acid chain: Hemoglobin subunit beta (147 aa).

Valine 2 bears the N-acetylvaline mark. A Globin domain is found at 3–147; sequence HLTGEEKSAV…VANALAHKYH (145 aa). A Phosphothreonine modification is found at threonine 13. Residue serine 45 is modified to Phosphoserine. Lysine 60 bears the N6-acetyllysine mark. Histidine 64 is a heme b binding site. At lysine 83 the chain carries N6-acetyllysine. A heme b-binding site is contributed by histidine 93. Cysteine 94 carries the post-translational modification S-nitrosocysteine. Lysine 145 is modified (N6-acetyllysine).

The protein belongs to the globin family. As to quaternary structure, heterotetramer of two alpha chains and two beta chains. In terms of tissue distribution, red blood cells.

In terms of biological role, involved in oxygen transport from the lung to the various peripheral tissues. The chain is Hemoglobin subunit beta (HBB) from Callimico goeldii (Goeldi's marmoset).